We begin with the raw amino-acid sequence, 362 residues long: tRNA N6-adenosine threonylcarbamoyltransferase (362 aa).

2 residues coordinate Fe cation: His116 and His120. Substrate-binding positions include 138 to 142 (LVSGG), Asp171, Gly184, and Asn284. Asp312 lines the Fe cation pocket.

This sequence belongs to the KAE1 / TsaD family. The cofactor is Fe(2+).

Its subcellular location is the cytoplasm. The enzyme catalyses L-threonylcarbamoyladenylate + adenosine(37) in tRNA = N(6)-L-threonylcarbamoyladenosine(37) in tRNA + AMP + H(+). In terms of biological role, required for the formation of a threonylcarbamoyl group on adenosine at position 37 (t(6)A37) in tRNAs that read codons beginning with adenine. Is involved in the transfer of the threonylcarbamoyl moiety of threonylcarbamoyl-AMP (TC-AMP) to the N6 group of A37, together with TsaE and TsaB. TsaD likely plays a direct catalytic role in this reaction. The protein is tRNA N6-adenosine threonylcarbamoyltransferase of Chelativorans sp. (strain BNC1).